Consider the following 382-residue polypeptide: Heme A synthase (382 aa).

Transmembrane regions (helical) follow at residues 25 to 45 (GAVR…VAVG), 112 to 132 (LLGR…WARG), 138 to 158 (LLLG…IGWI), 176 to 196 (LALH…LAAG), 211 to 231 (VVAG…GLVA), 270 to 290 (LALV…VAIA), 303 to 323 (AAAG…GLGI), and 327 to 347 (LLHV…AVLI). Heme is bound at residue histidine 277. Residue histidine 338 participates in heme binding.

This sequence belongs to the COX15/CtaA family. Type 2 subfamily. In terms of assembly, interacts with CtaB. It depends on heme b as a cofactor.

Its subcellular location is the cell membrane. The catalysed reaction is Fe(II)-heme o + 2 A + H2O = Fe(II)-heme a + 2 AH2. Its pathway is porphyrin-containing compound metabolism; heme A biosynthesis; heme A from heme O: step 1/1. In terms of biological role, catalyzes the conversion of heme O to heme A by two successive hydroxylations of the methyl group at C8. The first hydroxylation forms heme I, the second hydroxylation results in an unstable dihydroxymethyl group, which spontaneously dehydrates, resulting in the formyl group of heme A. The protein is Heme A synthase of Methylorubrum extorquens (strain PA1) (Methylobacterium extorquens).